A 353-amino-acid chain; its full sequence is N-acetyl-gamma-glutamyl-phosphate reductase (353 aa).

Cysteine 155 is an active-site residue.

It belongs to the NAGSA dehydrogenase family. Type 1 subfamily.

The protein localises to the cytoplasm. The catalysed reaction is N-acetyl-L-glutamate 5-semialdehyde + phosphate + NADP(+) = N-acetyl-L-glutamyl 5-phosphate + NADPH + H(+). The protein operates within amino-acid biosynthesis; L-arginine biosynthesis; N(2)-acetyl-L-ornithine from L-glutamate: step 3/4. In terms of biological role, catalyzes the NADPH-dependent reduction of N-acetyl-5-glutamyl phosphate to yield N-acetyl-L-glutamate 5-semialdehyde. The polypeptide is N-acetyl-gamma-glutamyl-phosphate reductase (Microcystis aeruginosa (strain NIES-843 / IAM M-2473)).